Here is a 459-residue protein sequence, read N- to C-terminus: mRNA-capping enzyme subunit alpha (459 aa).

Lys-70 serves as the catalytic N6-GMP-lysine intermediate. Residues 415 to 459 are disordered; it reads MAGGSGRPLPSQSQNATLSTSKPVHSQPPSNDKEPKYVDEDDWSD. Over residues 424–444 the composition is skewed to polar residues; the sequence is PSQSQNATLSTSKPVHSQPPS.

This sequence belongs to the eukaryotic GTase family. In terms of assembly, heterodimer. The mRNA-capping enzyme is composed of two separate chains alpha and beta, respectively a mRNA guanylyltransferase and an mRNA 5'-triphosphate monophosphatase.

The protein localises to the nucleus. The catalysed reaction is a 5'-end diphospho-ribonucleoside in mRNA + GTP + H(+) = a 5'-end (5'-triphosphoguanosine)-ribonucleoside in mRNA + diphosphate. Functionally, second step of mRNA capping. Transfer of the GMP moiety of GTP to the 5'-diphosphate terminus of RNA via a covalent enzyme-GMP reaction intermediate. This chain is mRNA-capping enzyme subunit alpha (CEG1), found in Saccharomyces cerevisiae (strain ATCC 204508 / S288c) (Baker's yeast).